We begin with the raw amino-acid sequence, 162 residues long: MKMFVPAVVFAASASAWAVNGDNAQPLEKIAPYPQAEKGMKRQVITLTPQQDESTLKVELLIGQTLNVDCNQHRLGGKLKTKTLEGWGYDYYVFDNVTSQVSTMMACPEGKKEPKFVTAWLGQDGMLRYNSKLPIVVYTPANVDVKYRIWKADANVQNAVAR.

Positions 1–18 (MKMFVPAVVFAASASAWA) are cleaved as a signal peptide. The cysteines at positions 70 and 107 are disulfide-linked.

Belongs to the protease inhibitor I11 (ecotin) family. Homodimer.

Its subcellular location is the periplasm. In terms of biological role, general inhibitor of pancreatic serine proteases: inhibits chymotrypsin, trypsin, elastases, factor X, kallikrein as well as a variety of other proteases. The chain is Ecotin from Salmonella arizonae (strain ATCC BAA-731 / CDC346-86 / RSK2980).